We begin with the raw amino-acid sequence, 256 residues long: Small ribosomal subunit protein eS1 (256 aa).

The residue at position 2 (alanine 2) is an N-acetylalanine; partial.

It belongs to the eukaryotic ribosomal protein eS1 family. As to quaternary structure, component of the small ribosomal subunit. Mature ribosomes consist of a small (40S) and a large (60S) subunit. The 40S subunit contains about 33 different proteins and 1 molecule of RNA (18S). The 60S subunit contains about 49 different proteins and 3 molecules of RNA (25S, 5.8S and 5S).

The protein localises to the cytoplasm. This is Small ribosomal subunit protein eS1 from Lachancea thermotolerans (strain ATCC 56472 / CBS 6340 / NRRL Y-8284) (Yeast).